The chain runs to 391 residues: Ferrochelatase (391 aa).

Fe cation contacts are provided by histidine 196 and glutamate 281.

It belongs to the ferrochelatase family.

The protein resides in the cytoplasm. It carries out the reaction heme b + 2 H(+) = protoporphyrin IX + Fe(2+). The protein operates within porphyrin-containing compound metabolism; protoheme biosynthesis; protoheme from protoporphyrin-IX: step 1/1. Functionally, catalyzes the ferrous insertion into protoporphyrin IX. In Synechococcus sp. (strain WH7803), this protein is Ferrochelatase.